A 259-amino-acid chain; its full sequence is Flagellar L-ring protein (259 aa).

The N-terminal stretch at 1–15 (MKRISLIALVTIMSG) is a signal peptide. Cys-16 carries the N-palmitoyl cysteine lipid modification. The S-diacylglycerol cysteine moiety is linked to residue Cys-16.

This sequence belongs to the FlgH family. As to quaternary structure, the basal body constitutes a major portion of the flagellar organelle and consists of four rings (L,P,S, and M) mounted on a central rod.

It is found in the cell outer membrane. The protein resides in the bacterial flagellum basal body. In terms of biological role, assembles around the rod to form the L-ring and probably protects the motor/basal body from shearing forces during rotation. The sequence is that of Flagellar L-ring protein from Vibrio vulnificus (strain CMCP6).